Consider the following 86-residue polypeptide: Evasin-3 (86 aa).

The N-terminal stretch at Met1 to Gly20 is a signal peptide. Cystine bridges form between Cys42-Cys57, Cys46-Cys59, and Cys53-Cys70. Asn45 carries N-linked (GlcNAc...) asparagine glycosylation. A glycan (N-linked (GlcNAc...) asparagine) is linked at Asn76.

Monomer.

It localises to the secreted. Salivary chemokine-binding protein which shows chemokine neutralizing activity and binds to host chemokines CXCL1, CXCL2, CXCL3, CXCL5, CXCL6 and CXCL8. Binds to CXCL8 with 1:1 stoichiometry. Disrupts CXCL8 homodimer formation, disrupts the glycosaminoglycan-binding site of CXCL8 and inhibits the interaction of CXCL8 with CXCR2. This is Evasin-3 from Rhipicephalus sanguineus (Brown dog tick).